The sequence spans 201 residues: Prostamide/prostaglandin F synthase (201 aa).

The protein belongs to the peroxiredoxin-like PRXL2 family. Prostamide/prostaglandin F synthase subfamily.

The protein localises to the cytoplasm. Its subcellular location is the cytosol. It carries out the reaction prostaglandin H2 + [thioredoxin]-dithiol = prostaglandin F2alpha + [thioredoxin]-disulfide. The enzyme catalyses prostamide F2alpha + [thioredoxin]-disulfide = prostamide H2 + [thioredoxin]-dithiol. Its function is as follows. Catalyzes the reduction of prostaglandin-ethanolamide H(2) (prostamide H(2)) to prostamide F(2alpha) with NADPH as proton donor. Also able to reduce prostaglandin H(2) to prostaglandin F(2alpha). This chain is Prostamide/prostaglandin F synthase (prxl2b), found in Xenopus laevis (African clawed frog).